The following is a 212-amino-acid chain: U8 snoRNA-decapping enzyme (212 aa).

Residues 1 to 23 (MAESRSPDRGAKEDKPRPRNISR) form a disordered region. 3 residues coordinate substrate: H37, R63, and F70. The Nudix hydrolase domain maps to 39–187 (LLHAPSQAKL…IGNSKSQLLY (149 aa)). G72, E89, E93, and E150 together coordinate Mn(2+). Residues 74–95 (FVDTRDISLEEGLKRELEEELG) carry the Nudix box motif. Residues N180 and Q184 each contribute to the substrate site.

It belongs to the Nudix hydrolase family. NUDT16 subfamily. Homodimer. It depends on Mg(2+) as a cofactor. The cofactor is Mn(2+). Co(2+) is required as a cofactor. In terms of tissue distribution, detected in ovary, and at very low levels in epithelial cells (at protein level).

The protein resides in the nucleus. The protein localises to the nucleolus. Its subcellular location is the nucleoplasm. It is found in the cytoplasm. It catalyses the reaction a 5'-end (N(7)-methyl 5'-triphosphoguanosine)-ribonucleoside in mRNA + H2O = N(7)-methyl-GDP + a 5'-end phospho-ribonucleoside in mRNA + 2 H(+). The catalysed reaction is IDP + H2O = IMP + phosphate + H(+). It carries out the reaction dIDP + H2O = dIMP + phosphate + H(+). The enzyme catalyses a 5'-end NAD(+)-phospho-ribonucleoside in mRNA + H2O = a 5'-end phospho-ribonucleoside in mRNA + NAD(+) + H(+). It catalyses the reaction a 5'-end FAD-phospho-ribonucleoside in mRNA + H2O = a 5'-end phospho-adenosine-phospho-ribonucleoside in mRNA + FMN + 2 H(+). The catalysed reaction is a 5'-end CoA-ribonucleoside in mRNA + H2O = a 5'-end phospho-adenosine-phospho-ribonucleoside in mRNA + (R)-4'-phosphopantetheine + 2 H(+). In terms of biological role, RNA-binding and decapping enzyme that catalyzes the cleavage of the cap structure of snoRNAs and mRNAs in a metal-dependent manner. Part of the U8 snoRNP complex that is required for the accumulation of mature 5.8S and 28S rRNA. Has diphosphatase activity and removes m7G and/or m227G caps from U8 snoRNA and leaves a 5'monophosphate on the RNA. Also catalyzes the cleavage of the cap structure on mRNAs. Does not hydrolyze cap analog structures like 7-methylguanosine nucleoside triphosphate (m7GpppG). Also hydrolysis m7G- and m227G U3-capped RNAs but with less efficiencies. Has broad substrate specificity with manganese or cobalt as cofactor and can act on various RNA species. Binds to the U8 snoRNA; metal is not required for RNA-binding. May play a role in the regulation of snoRNAs and mRNAs degradation. Also acts as a phosphatase; hydrolyzes the non-canonical purine nucleotides inosine diphosphate (IDP) and deoxyinosine diphosphate (dITP) as well as guanosine diphosphate (GDP), deoxyguanosine diphosphate (dGDP), xanthine diphosphate (XDP), inosine triphosphate (ITP) and deoxyinosine triphosphate (ITP) to their respective monophosphate derivatives and does not distinguish between the deoxy- and ribose forms. The order of activity with different substrates is IDP &gt; dIDP &gt;&gt; GDP = dGDP &gt; XDP = ITP = dITP. Binds strongly to GTP, ITP and XTP. Participates in the hydrolysis of dIDP/IDP and probably excludes non-canonical purines from RNA and DNA precursor pools, thus preventing their incorporation into RNA and DNA and avoiding chromosomal lesions. Exhibits decapping activity towards NAD-capped RNAs and FAD-capped RNAs. Exhibits decapping activity towards dpCoA-capped RNAs in vitro. This is U8 snoRNA-decapping enzyme (nudt16) from Xenopus laevis (African clawed frog).